Here is a 144-residue protein sequence, read N- to C-terminus: Large ribosomal subunit protein uL15 (144 aa).

The tract at residues 1–49 is disordered; it reads MRLNTLSPAAGSKSAPKRVGRGIGSGLGKTAGRGHKGQKSRSGGGVRVG. Positions 21–31 are enriched in gly residues; it reads RGIGSGLGKTA.

This sequence belongs to the universal ribosomal protein uL15 family. In terms of assembly, part of the 50S ribosomal subunit.

In terms of biological role, binds to the 23S rRNA. This is Large ribosomal subunit protein uL15 from Shewanella frigidimarina (strain NCIMB 400).